Reading from the N-terminus, the 280-residue chain is Late embryogenesis abundant protein 76 (280 aa).

2 disordered regions span residues 1-156 and 220-241; these read MASN…GEAV and EEED…TDPT. Over residues 28 to 39 the composition is skewed to basic and acidic residues; that stretch reads MRDKAEEGKDKT. LEA 11-mer repeat repeat units follow at residues 31-41, 53-63, 75-85, 97-107, and 119-129; these read KAEEGKDKTSQ, TAQAAKDKTSQ, and TTQSSKEKTSQ. Over residues 40–114 the composition is skewed to low complexity; sequence SQTAQKAQQK…TSQAAQTTQQ (75 aa). Basic and acidic residues-rich tracts occupy residues 115–127 and 136–145; these read KAHE…KEKT and EKARETKDKT. A compositionally biased stretch (low complexity) spans 230–239; the sequence is TTTCTTQSTD.

It belongs to the LEA type 4 family.

Functionally, lea proteins are late embryonic proteins abundant in higher plant seed embryos. The polypeptide is Late embryogenesis abundant protein 76 (Brassica napus (Rape)).